We begin with the raw amino-acid sequence, 110 residues long: Phosphoribosyl-ATP pyrophosphatase (110 aa).

This sequence belongs to the PRA-PH family.

It is found in the cytoplasm. It carries out the reaction 1-(5-phospho-beta-D-ribosyl)-ATP + H2O = 1-(5-phospho-beta-D-ribosyl)-5'-AMP + diphosphate + H(+). It participates in amino-acid biosynthesis; L-histidine biosynthesis; L-histidine from 5-phospho-alpha-D-ribose 1-diphosphate: step 2/9. In Teredinibacter turnerae (strain ATCC 39867 / T7901), this protein is Phosphoribosyl-ATP pyrophosphatase.